The following is a 320-amino-acid chain: Protein MRG1 (320 aa).

The interval 1-28 is disordered; that stretch reads MGSSSKEETASDGDTASGGASPSNDGRL. Positions 12–24 are enriched in polar residues; it reads DGDTASGGASPSN. The 51-residue stretch at 30-80 folds into the Tudor-knot domain; sequence SEGERVLAYHGPRVYGAKVQKVELRKKEWKYFVHYLGWNKNWDEWVSADRL. Residues 93 to 104 are compositionally biased toward basic and acidic residues; that stretch reads ALDKKQGVEKGT. Residues 93-147 form a disordered region; the sequence is ALDKKQGVEKGTKSGRSAQTKTRSSADTKADKDDTKTNAAKGKKRKHESGNEKDN. A compositionally biased stretch (polar residues) spans 106–115; it reads SGRSAQTKTR. Positions 116–128 are enriched in basic and acidic residues; sequence SSADTKADKDDTK. An MRG domain is found at 150–318; that stretch reads AEKLMKIQIP…KVSDGKGKGK (169 aa).

Interacts with HAM1 and HAM2. Interacts (via MRG domain) with CO. Component of the NuA4 histone acetyltransferase complex. In terms of tissue distribution, ubiquitous. Mainly expressed in the vasculature of cotyledons and leaves, and in roots and inflorescences.

Its subcellular location is the nucleus. Chromatin remodeling factor. Acts as a 'reader' protein by binding to H3K36me3 and H3K36me3 to control histone H4 acetylation. Increases the transcriptional levels of the flowering time genes FLC and FT. Binds the chromatin at the FT promoter upon interaction with CO. This chain is Protein MRG1, found in Arabidopsis thaliana (Mouse-ear cress).